Consider the following 414-residue polypeptide: Arginine deiminase (414 aa).

The active-site Amidino-cysteine intermediate is the Cys-402.

The protein belongs to the arginine deiminase family.

The protein resides in the cytoplasm. It catalyses the reaction L-arginine + H2O = L-citrulline + NH4(+). The protein operates within amino-acid degradation; L-arginine degradation via ADI pathway; carbamoyl phosphate from L-arginine: step 1/2. This is Arginine deiminase from Oenococcus oeni (strain ATCC BAA-331 / PSU-1).